Consider the following 137-residue polypeptide: MPTINQLVRKPRKSKVKKSKSPALNVGYNSRKKVQTNVSSPQKRGVATRVGTMTPKKPNSALRKFARVRLTNLIEVTAYIPGIGHNLQKHSVVLLRGGRVKDLPGVRYHIVRGALDTAGVNDRKQGRSKYGTKRPKG.

The interval 1 to 57 (MPTINQLVRKPRKSKVKKSKSPALNVGYNSRKKVQTNVSSPQKRGVATRVGTMTPKK) is disordered. Residues 9 to 20 (RKPRKSKVKKSK) are compositionally biased toward basic residues. Asp-102 carries the post-translational modification 3-methylthioaspartic acid.

Belongs to the universal ribosomal protein uS12 family. Part of the 30S ribosomal subunit. Contacts proteins S8 and S17. May interact with IF1 in the 30S initiation complex.

In terms of biological role, with S4 and S5 plays an important role in translational accuracy. Functionally, interacts with and stabilizes bases of the 16S rRNA that are involved in tRNA selection in the A site and with the mRNA backbone. Located at the interface of the 30S and 50S subunits, it traverses the body of the 30S subunit contacting proteins on the other side and probably holding the rRNA structure together. The combined cluster of proteins S8, S12 and S17 appears to hold together the shoulder and platform of the 30S subunit. The chain is Small ribosomal subunit protein uS12 from Streptococcus suis (strain 05ZYH33).